Reading from the N-terminus, the 374-residue chain is Ribosomal RNA large subunit methyltransferase G (374 aa).

It belongs to the methyltransferase superfamily. RlmG family.

The protein resides in the cytoplasm. The catalysed reaction is guanosine(1835) in 23S rRNA + S-adenosyl-L-methionine = N(2)-methylguanosine(1835) in 23S rRNA + S-adenosyl-L-homocysteine + H(+). Functionally, specifically methylates the guanine in position 1835 (m2G1835) of 23S rRNA. This Pseudomonas entomophila (strain L48) protein is Ribosomal RNA large subunit methyltransferase G.